The primary structure comprises 390 residues: Homoserine O-succinyltransferase (390 aa).

The region spanning 56-365 (NAVLICHALS…SPHGHDAFLL (310 aa)) is the AB hydrolase-1 domain. S162 serves as the catalytic Nucleophile. R232 contributes to the substrate binding site. Catalysis depends on residues D327 and H360. Position 361 (D361) interacts with substrate.

Belongs to the AB hydrolase superfamily. MetX family. In terms of assembly, homodimer.

The protein localises to the cytoplasm. The catalysed reaction is L-homoserine + succinyl-CoA = O-succinyl-L-homoserine + CoA. The protein operates within amino-acid biosynthesis; L-methionine biosynthesis via de novo pathway; O-succinyl-L-homoserine from L-homoserine: step 1/1. Functionally, transfers a succinyl group from succinyl-CoA to L-homoserine, forming succinyl-L-homoserine. In vitro, also has serine succinyl transferase activity. The polypeptide is Homoserine O-succinyltransferase (Litchfieldella anticariensis (strain DSM 16096 / CECT 5854 / CIP 108499 / LMG 22089 / FP35) (Halomonas anticariensis)).